The sequence spans 245 residues: 3-deoxy-manno-octulosonate cytidylyltransferase (245 aa).

The protein belongs to the KdsB family.

It localises to the cytoplasm. The enzyme catalyses 3-deoxy-alpha-D-manno-oct-2-ulosonate + CTP = CMP-3-deoxy-beta-D-manno-octulosonate + diphosphate. It functions in the pathway nucleotide-sugar biosynthesis; CMP-3-deoxy-D-manno-octulosonate biosynthesis; CMP-3-deoxy-D-manno-octulosonate from 3-deoxy-D-manno-octulosonate and CTP: step 1/1. It participates in bacterial outer membrane biogenesis; lipopolysaccharide biosynthesis. Functionally, activates KDO (a required 8-carbon sugar) for incorporation into bacterial lipopolysaccharide in Gram-negative bacteria. The protein is 3-deoxy-manno-octulosonate cytidylyltransferase of Rhodopseudomonas palustris (strain TIE-1).